Here is a 355-residue protein sequence, read N- to C-terminus: Acidic fibroblast growth factor intracellular-binding protein B (355 aa).

Interacts with IER2.

Its subcellular location is the nucleus. It localises to the endomembrane system. Mediates with IER2 FGF-signaling in Kupffer's vesicle ciliogenesis and in the establishment of laterality in the embryo. May be involved in mitogenic function of FGF1. The sequence is that of Acidic fibroblast growth factor intracellular-binding protein B from Danio rerio (Zebrafish).